Consider the following 453-residue polypeptide: UDP-glycosyltransferase 79B6 (453 aa).

Residues serine 266, 325–327 (VQQ), 342–350 (HCGFGSMWE), and 364–367 (LGEQ) contribute to the UDP-alpha-D-glucose site.

Belongs to the UDP-glycosyltransferase family.

The chain is UDP-glycosyltransferase 79B6 (UGT79B6) from Arabidopsis thaliana (Mouse-ear cress).